The chain runs to 173 residues: MKNIVLIGFMGTGKTSVGKLVAKKLGFDFVDVDEVIEKATGMEISEIFSKFGESRFRDIEEEMIKLITPKKRQVIATGGGVVLRDENMKRLKKDGVIFCLRASENVIFERLKQTTNRPLLQVENPEERIKELLQKRMPLYEKADFCIDTEGLTPEEVAEKIIKEYERLSNGKT.

11 to 16 is an ATP binding site; it reads GTGKTS. Threonine 15 lines the Mg(2+) pocket. Residues aspartate 33, arginine 57, and glycine 79 each contribute to the substrate site. Residue arginine 117 coordinates ATP. Arginine 136 is a substrate binding site.

It belongs to the shikimate kinase family. As to quaternary structure, monomer. Mg(2+) is required as a cofactor.

It is found in the cytoplasm. The enzyme catalyses shikimate + ATP = 3-phosphoshikimate + ADP + H(+). It functions in the pathway metabolic intermediate biosynthesis; chorismate biosynthesis; chorismate from D-erythrose 4-phosphate and phosphoenolpyruvate: step 5/7. In terms of biological role, catalyzes the specific phosphorylation of the 3-hydroxyl group of shikimic acid using ATP as a cosubstrate. The chain is Shikimate kinase from Thermodesulfovibrio yellowstonii (strain ATCC 51303 / DSM 11347 / YP87).